The primary structure comprises 313 residues: Ribosomal RNA small subunit methyltransferase H (313 aa).

S-adenosyl-L-methionine contacts are provided by residues 33-35 (AGH), Asp53, Phe82, Asp103, and Gln110.

It belongs to the methyltransferase superfamily. RsmH family.

It localises to the cytoplasm. It carries out the reaction cytidine(1402) in 16S rRNA + S-adenosyl-L-methionine = N(4)-methylcytidine(1402) in 16S rRNA + S-adenosyl-L-homocysteine + H(+). Its function is as follows. Specifically methylates the N4 position of cytidine in position 1402 (C1402) of 16S rRNA. This is Ribosomal RNA small subunit methyltransferase H from Ruminiclostridium cellulolyticum (strain ATCC 35319 / DSM 5812 / JCM 6584 / H10) (Clostridium cellulolyticum).